Here is a 150-residue protein sequence, read N- to C-terminus: uncharacterized protein (150 aa).

The protein resides in the plastid. Its subcellular location is the chloroplast. This is an uncharacterized protein from Pyropia yezoensis (Susabi-nori).